Consider the following 645-residue polypeptide: Threonine--tRNA ligase (645 aa).

The TGS domain occupies 1–62 (MSIHITFPDG…VEDGSLEIVT (62 aa)). The tract at residues 242–541 (DHRKLGKELD…LTEVYKGAFP (300 aa)) is catalytic. Residues cysteine 336, histidine 387, and histidine 518 each contribute to the Zn(2+) site.

It belongs to the class-II aminoacyl-tRNA synthetase family. In terms of assembly, homodimer. The cofactor is Zn(2+).

It is found in the cytoplasm. The catalysed reaction is tRNA(Thr) + L-threonine + ATP = L-threonyl-tRNA(Thr) + AMP + diphosphate + H(+). Its function is as follows. Catalyzes the attachment of threonine to tRNA(Thr) in a two-step reaction: L-threonine is first activated by ATP to form Thr-AMP and then transferred to the acceptor end of tRNA(Thr). Also edits incorrectly charged L-seryl-tRNA(Thr). The protein is Threonine--tRNA ligase of Enterococcus faecalis (strain ATCC 700802 / V583).